The following is a 230-amino-acid chain: Protein LURP-one-related 11 (230 aa).

This sequence belongs to the LOR family.

Its function is as follows. Might be related to the phospholipid scramblase and tubby-like superfamily of membrane tethered transcription factors. This chain is Protein LURP-one-related 11, found in Arabidopsis thaliana (Mouse-ear cress).